The primary structure comprises 218 residues: Large ribosomal subunit protein bL25 (218 aa).

The tract at residues 185 to 218 is disordered; sequence ARAAEEEAPAAEETTAEPELVRERREPRAEEEEE. Residues 190 to 200 are compositionally biased toward acidic residues; the sequence is EEAPAAEETTA. A compositionally biased stretch (basic and acidic residues) spans 203–212; that stretch reads ELVRERREPR.

Belongs to the bacterial ribosomal protein bL25 family. CTC subfamily. In terms of assembly, part of the 50S ribosomal subunit; part of the 5S rRNA/L5/L18/L25 subcomplex. Contacts the 5S rRNA. Binds to the 5S rRNA independently of L5 and L18.

In terms of biological role, this is one of the proteins that binds to the 5S RNA in the ribosome where it forms part of the central protuberance. The chain is Large ribosomal subunit protein bL25 from Roseiflexus castenholzii (strain DSM 13941 / HLO8).